The following is a 251-amino-acid chain: MRILIILSIILCSFFARADLEYIDNDIYNYNGGRNENGCLEVYDPYEKFNRKVFAFNSVLDHIILRPLAVGYKNITNDYIKARVNSFVSNVYTPLTAVNYGLQLNYDKTIKSVWRFLINTTLGIGGLFDVASKVGLQSDRQTFGSTLAHYGVAPGPYLVLPIIGSTNARDMTDSVITNYAINPLMYYTHNDFDLGILAISKITDRYVVLPFSDYVMKNSTDPYVAIRSALHRTREASVQYPENFKCPKPKN.

The signal sequence occupies residues 1–18 (MRILIILSIILCSFFARA).

The protein belongs to the MlaA family.

This is an uncharacterized protein from Rickettsia typhi (strain ATCC VR-144 / Wilmington).